Consider the following 205-residue polypeptide: Large ribosomal subunit protein uL18 (205 aa).

Belongs to the universal ribosomal protein uL18 family. In terms of assembly, part of the 50S ribosomal subunit. Contacts the 5S and 23S rRNAs.

Functionally, this is one of the proteins that bind and probably mediate the attachment of the 5S RNA into the large ribosomal subunit, where it forms part of the central protuberance. The chain is Large ribosomal subunit protein uL18 from Pyrobaculum arsenaticum (strain DSM 13514 / JCM 11321 / PZ6).